Consider the following 259-residue polypeptide: Small ribosomal subunit protein uS2 (259 aa).

It belongs to the universal ribosomal protein uS2 family.

This chain is Small ribosomal subunit protein uS2, found in Streptococcus pneumoniae (strain Hungary19A-6).